A 617-amino-acid polypeptide reads, in one-letter code: Proline--tRNA ligase (617 aa).

The protein belongs to the class-II aminoacyl-tRNA synthetase family. ProS type 1 subfamily. As to quaternary structure, homodimer.

Its subcellular location is the cytoplasm. It carries out the reaction tRNA(Pro) + L-proline + ATP = L-prolyl-tRNA(Pro) + AMP + diphosphate. Catalyzes the attachment of proline to tRNA(Pro) in a two-step reaction: proline is first activated by ATP to form Pro-AMP and then transferred to the acceptor end of tRNA(Pro). As ProRS can inadvertently accommodate and process non-cognate amino acids such as alanine and cysteine, to avoid such errors it has two additional distinct editing activities against alanine. One activity is designated as 'pretransfer' editing and involves the tRNA(Pro)-independent hydrolysis of activated Ala-AMP. The other activity is designated 'posttransfer' editing and involves deacylation of mischarged Ala-tRNA(Pro). The misacylated Cys-tRNA(Pro) is not edited by ProRS. This Streptococcus agalactiae serotype Ia (strain ATCC 27591 / A909 / CDC SS700) protein is Proline--tRNA ligase.